Reading from the N-terminus, the 266-residue chain is Type III pantothenate kinase (266 aa).

Position 6–13 (Asp-6–Val-13) interacts with ATP. Residue Gly-107 to Arg-110 coordinates substrate. The active-site Proton acceptor is Asp-109. Asp-129 serves as a coordination point for K(+). Thr-132 provides a ligand contact to ATP. Thr-184 contacts substrate.

The protein belongs to the type III pantothenate kinase family. In terms of assembly, homodimer. It depends on NH4(+) as a cofactor. The cofactor is K(+).

The protein localises to the cytoplasm. It catalyses the reaction (R)-pantothenate + ATP = (R)-4'-phosphopantothenate + ADP + H(+). Its pathway is cofactor biosynthesis; coenzyme A biosynthesis; CoA from (R)-pantothenate: step 1/5. Its function is as follows. Catalyzes the phosphorylation of pantothenate (Pan), the first step in CoA biosynthesis. In Acidiphilium cryptum (strain JF-5), this protein is Type III pantothenate kinase.